The sequence spans 192 residues: DNA dC-&gt;dU-editing enzyme APOBEC-3Ca (192 aa).

A CMP/dCMP-type deaminase domain is found at 15–141 (IDPNTFRFHF…PNYQEGLCKL (127 aa)). His69 contacts Zn(2+). Residue Glu71 is the Proton donor of the active site. The Zn(2+) site is built by Cys100 and Cys103.

This sequence belongs to the cytidine and deoxycytidylate deaminase family. In terms of assembly, (Microbial infection) Interacts with feline foamy virus protein Bet. This interaction does not induce APOBEC3Ca degradation but prevents its dimerization and incorporation into the virion. The cofactor is Zn(2+).

It is found in the nucleus. Its subcellular location is the cytoplasm. The catalysed reaction is a 2'-deoxycytidine in single-stranded DNA + H2O + H(+) = a 2'-deoxyuridine in single-stranded DNA + NH4(+). In terms of biological role, DNA deaminase (cytidine deaminase) which acts as an inhibitor of retrovirus replication and retrotransposon mobility via deaminase-dependent and -independent mechanisms. Selectively targets single-stranded DNA and does not deaminate double-stranded DNA or single- or double-stranded RNA. Does not reduce infectivity of foamy feline virus, feline immunodeficiency virus or feline leukemia virus. In Felis catus (Cat), this protein is DNA dC-&gt;dU-editing enzyme APOBEC-3Ca.